Consider the following 430-residue polypeptide: Trigger factor (430 aa).

A PPIase FKBP-type domain is found at 163-248; it reads GDTAVFDFAG…LHEVKTKQVP (86 aa).

This sequence belongs to the FKBP-type PPIase family. Tig subfamily.

It localises to the cytoplasm. It catalyses the reaction [protein]-peptidylproline (omega=180) = [protein]-peptidylproline (omega=0). Functionally, involved in protein export. Acts as a chaperone by maintaining the newly synthesized protein in an open conformation. Functions as a peptidyl-prolyl cis-trans isomerase. The protein is Trigger factor of Exiguobacterium sp. (strain ATCC BAA-1283 / AT1b).